The primary structure comprises 335 residues: UDP-N-acetylglucosamine--N-acetylmuramyl-(pentapeptide) pyrophosphoryl-undecaprenol N-acetylglucosamine transferase (335 aa).

Residues 9-11 (TGG), N123, S176, and Q274 each bind UDP-N-acetyl-alpha-D-glucosamine.

The protein belongs to the glycosyltransferase 28 family. MurG subfamily.

The protein resides in the cell inner membrane. The enzyme catalyses di-trans,octa-cis-undecaprenyl diphospho-N-acetyl-alpha-D-muramoyl-L-alanyl-D-glutamyl-meso-2,6-diaminopimeloyl-D-alanyl-D-alanine + UDP-N-acetyl-alpha-D-glucosamine = di-trans,octa-cis-undecaprenyl diphospho-[N-acetyl-alpha-D-glucosaminyl-(1-&gt;4)]-N-acetyl-alpha-D-muramoyl-L-alanyl-D-glutamyl-meso-2,6-diaminopimeloyl-D-alanyl-D-alanine + UDP + H(+). It functions in the pathway cell wall biogenesis; peptidoglycan biosynthesis. Cell wall formation. Catalyzes the transfer of a GlcNAc subunit on undecaprenyl-pyrophosphoryl-MurNAc-pentapeptide (lipid intermediate I) to form undecaprenyl-pyrophosphoryl-MurNAc-(pentapeptide)GlcNAc (lipid intermediate II). The sequence is that of UDP-N-acetylglucosamine--N-acetylmuramyl-(pentapeptide) pyrophosphoryl-undecaprenol N-acetylglucosamine transferase from Campylobacter fetus subsp. fetus (strain 82-40).